The chain runs to 1363 residues: MTSTPSKSRKSSKGSKAAKAAASAPETRPLAKTPPPFRNRVVDKKGLKQLVAWAYKHHGTAATSAMADQLKDLGFRYATQAAVSISVNDLKVPEAKQNLLGQAEELITATEESYRLGVITEVERHTKVIDTWTETNERLVDAVKKNFNQNDPLNSVWMMANSGARGNMSQVRQLVGMRGLMANPQGEIIDLPIRTNFREGLTVTEYVISSYGARKGLVDTALRTADSGYLTRRLVDVAQDVIVREDDCGTSRCILVKAEDGKYGNRLVGRLTADQVVGADGEVLAERNTEIDPPLSKRFEKAAVQAVSVRSPLTCEANRSVCRKCYGWALAHNELVDLGEAVGIIAAQSIGEPGTQLTMRTFHTGGVSTAETGVVRSKLEGTVEFGAKARVRPYRTPHGVNAQQAEVDFNLTIQPSGKGKPQKIEITNGSLLFVDNGQAIDADVTVAQIAAGAVKKSVEKATKDVICDLAGQVSYDPSIQPREVTDRQGNITHKAQRLGRMWVLAGDVYNLPPNARPVVTAGATVTEGQVLAEASQASEYGGAIRLREALGDSREVQIVTTAMTLRDFKLQGESTHAGEIWNLEAKDGTRYRLNTIPGSKIGSGEVVAELNDDRFRTQTGGLVRFAPGLAIKKARSAKNGYEVNKGGTLLWIPQETHEINKDISLLMITDGQWIEAGTEVVKDIFSQTAGIVTVTQKNDILREIIVRSGSFHLCTEKKALERFQGDGVMVNPGEPIAKGISTETMVYVQTVETPEGSGLLLRPVEEYTIPNEAQLPDLGHVKQPNGPHLGLKASQRLAFKDNELVKSVEGVELLRTQLMLETFDTTPQMTVDVEAVPDKRAKTIERLQLVILESILVRRDTISDSSHGSTHTELQVEDGQSIKAGEVIATTQILCKQEGVAQMPEATADEPVRRLIVERPEDTLTISTNSQPVVTVGQRIVDGEELAAGQPSDCCGEVEKVDSTSVTLRLGRPYMVSPDSLLHVRDGDLVQRGDGLALLVFERQKTGDIVQGLPRIEELLEARRPRESAILCKKPGTVEIKQGEDDENTTVTVIEADDAVSEYPILLGRNVMVSDSQQVTAGELLTDGPINPHELLECFFEDLRSRKPLMDAAQEAIAKLQHRLVTEVQNVYKSQGVSIDDKHIEVIVRQMTSKVRVEDAGDTTLLPGELIELRQVEDTNQAMSITGGAPAEFTPVLLGITKASLNTDSFISAASFQETTRVLTEAAIEGKSDWLRGLKENVIIGRLIPAGTGFSGFEEELKAEAGPHPDILAEDPAGYRRMQNLRPDYTVDMPAAPAGDATAVLDDPSDADMEATRSRHGIEAGSNFAAFARPDADNELKEEQVVDAEAVEGLQEEGLLSDE.

The interval Met-1–Asn-39 is disordered. Low complexity predominate over residues Gly-14–Ala-24. Residues Cys-248, Cys-315, Cys-322, and Cys-325 each contribute to the Zn(2+) site.

This sequence belongs to the RNA polymerase beta' chain family. RpoC2 subfamily. As to quaternary structure, in cyanobacteria the RNAP catalytic core is composed of 2 alpha, 1 beta, 1 beta', 1 gamma and 1 omega subunit. When a sigma factor is associated with the core the holoenzyme is formed, which can initiate transcription. The cofactor is Zn(2+).

The enzyme catalyses RNA(n) + a ribonucleoside 5'-triphosphate = RNA(n+1) + diphosphate. Functionally, DNA-dependent RNA polymerase catalyzes the transcription of DNA into RNA using the four ribonucleoside triphosphates as substrates. This Synechococcus sp. (strain WH7803) protein is DNA-directed RNA polymerase subunit beta'.